The chain runs to 1726 residues: Transcription elongation factor SPT6 (1726 aa).

Acidic residues-rich tracts occupy residues 1–18 (MSDF…EFEE), 31–45 (EEDE…EDQD), and 55–79 (DDDD…SDSG). Disordered regions lie at residues 1 to 196 (MSDF…KGKK), 219 to 248 (AEFD…KKQT), and 482 to 512 (EVSE…QASR). Ser-90 bears the Phosphoserine mark. A compositionally biased stretch (acidic residues) spans 93 to 104 (DYLDDDDLDLIE). Over residues 110–120 (KVKRRKKKYSR) the composition is skewed to basic residues. Acidic residues-rich tracts occupy residues 146–157 (GDGEGEVEDGEA), 166–186 (DEEE…DDDG), 219–240 (AEFD…DDES), and 484–501 (SEED…EEEE). Residues 502–512 (QKGPDLKQASR) are compositionally biased toward basic and acidic residues. Positions 806-865 (LKRRNAWREDEREKKQQDVENLKKFLLSKKPHVVAVSGENRDAHMVMEDIKRTISELEQN) form a coiled coil. The S1 motif domain occupies 1204–1273 (WNHFDSGSCP…EKFNVDLTCR (70 aa)). The SH2 domain occupies 1316–1426 (YIKRVIAHPS…LLGHKYFHEC (111 aa)). Thr-1522 bears the Phosphothreonine mark. At Ser-1525 the chain carries Phosphoserine. Polar residues predominate over residues 1611-1627 (LMTPSYSYTTPGQQQAM). The tract at residues 1611 to 1726 (LMTPSYSYTT…ATPLLDEMDR (116 aa)) is disordered. Composition is skewed to low complexity over residues 1628-1640 (TTPQ…PQSS) and 1647-1656 (SSSTPSSSSS). Residues 1657–1669 (RVRTPQPKASSHT) are compositionally biased toward polar residues.

This sequence belongs to the SPT6 family.

It is found in the nucleus. Its function is as follows. Histone H3-H4 chaperone that plays a role in maintenance of chromatin structure during RNA polymerase II transcription elongation. Promotes the activation of the myogenic gene program by entailing erasure of the repressive H3K27me3 epigenetic mark through stabilization of the chromatin interaction of the H3K27 demethylase KDM6A. Plays an important role during early patterning and somitogenesis of the embryo. The sequence is that of Transcription elongation factor SPT6 (supt6h) from Danio rerio (Zebrafish).